A 110-amino-acid chain; its full sequence is Nucleoid-associated protein NFA_2940 (110 aa).

It belongs to the YbaB/EbfC family. In terms of assembly, homodimer.

It localises to the cytoplasm. The protein localises to the nucleoid. Binds to DNA and alters its conformation. May be involved in regulation of gene expression, nucleoid organization and DNA protection. This Nocardia farcinica (strain IFM 10152) protein is Nucleoid-associated protein NFA_2940.